Here is a 626-residue protein sequence, read N- to C-terminus: Phosphomethylpyrimidine synthase (626 aa).

Residues 92 to 106 (AREVKPEDNGLKGPD) show a composition bias toward basic and acidic residues. The interval 92–117 (AREVKPEDNGLKGPDRSAGVPPFPNV) is disordered. Substrate is bound by residues N219, M248, Y277, H313, 333-335 (SRG), 374-377 (DGLR), and E413. H417 is a Zn(2+) binding site. Residue Y440 coordinates substrate. H481 provides a ligand contact to Zn(2+). Residues C561, C564, and C569 each coordinate [4Fe-4S] cluster.

It belongs to the ThiC family. As to quaternary structure, homodimer. The cofactor is [4Fe-4S] cluster.

The enzyme catalyses 5-amino-1-(5-phospho-beta-D-ribosyl)imidazole + S-adenosyl-L-methionine = 4-amino-2-methyl-5-(phosphooxymethyl)pyrimidine + CO + 5'-deoxyadenosine + formate + L-methionine + 3 H(+). Its pathway is cofactor biosynthesis; thiamine diphosphate biosynthesis. Its function is as follows. Catalyzes the synthesis of the hydroxymethylpyrimidine phosphate (HMP-P) moiety of thiamine from aminoimidazole ribotide (AIR) in a radical S-adenosyl-L-methionine (SAM)-dependent reaction. In Novosphingobium aromaticivorans (strain ATCC 700278 / DSM 12444 / CCUG 56034 / CIP 105152 / NBRC 16084 / F199), this protein is Phosphomethylpyrimidine synthase.